The chain runs to 209 residues: Thymidylate kinase (209 aa).

10-17 lines the ATP pocket; sequence GIDGCGKT.

Belongs to the thymidylate kinase family.

It catalyses the reaction dTMP + ATP = dTDP + ADP. In terms of biological role, phosphorylation of dTMP to form dTDP in both de novo and salvage pathways of dTTP synthesis. The sequence is that of Thymidylate kinase from Synechococcus sp. (strain CC9605).